Reading from the N-terminus, the 90-residue chain is Long neurotoxin OH-34 (90 aa).

An N-terminal signal peptide occupies residues 1-20 (KTLLLTLVVVTILCLDLGYT). 5 cysteine pairs are disulfide-bonded: cysteine 23–cysteine 41, cysteine 34–cysteine 62, cysteine 47–cysteine 51, cysteine 66–cysteine 77, and cysteine 78–cysteine 83.

This sequence belongs to the three-finger toxin family. Long-chain subfamily. Type II alpha-neurotoxin sub-subfamily. In terms of tissue distribution, expressed by the venom gland.

Its subcellular location is the secreted. Functionally, binds with high affinity to muscular (alpha-1/CHRNA1) and neuronal (alpha-7/CHRNA7) nicotinic acetylcholine receptor (nAChR) and inhibits acetylcholine from binding to the receptor, thereby impairing neuromuscular and neuronal transmission. This Ophiophagus hannah (King cobra) protein is Long neurotoxin OH-34.